Reading from the N-terminus, the 242-residue chain is Protein ABHD14A (242 aa).

Residues 6–26 form a helical; Signal-anchor for type II membrane protein membrane-spanning segment; sequence AALLGLGLLLMFLLYMGLPGP. An N-linked (GlcNAc...) asparagine glycan is attached at asparagine 38. Residues serine 142, aspartate 193, and histidine 220 each act as charge relay system in the active site.

The protein belongs to the AB hydrolase superfamily. ABHD14 family.

Its subcellular location is the cytoplasm. The protein resides in the membrane. In terms of biological role, possible role in granule neuron development. The protein is Protein ABHD14A of Rattus norvegicus (Rat).